We begin with the raw amino-acid sequence, 126 residues long: Fluoride-specific ion channel FluC 1 (126 aa).

The next 4 membrane-spanning stretches (helical) occupy residues 1–21, 38–58, 67–87, and 99–119; these read MAGS…GAWL, WGTF…LALY, LALL…TFAV, and FVSL…AGVG. Na(+) is bound by residues Gly-77 and Ser-80.

The protein belongs to the fluoride channel Fluc/FEX (TC 1.A.43) family.

It localises to the cell inner membrane. It carries out the reaction fluoride(in) = fluoride(out). With respect to regulation, na(+) is not transported, but it plays an essential structural role and its presence is essential for fluoride channel function. Functionally, fluoride-specific ion channel. Important for reducing fluoride concentration in the cell, thus reducing its toxicity. The chain is Fluoride-specific ion channel FluC 1 from Synechococcus sp. (strain CC9902).